The following is a 225-amino-acid chain: UPF0758 protein XC_3944 (225 aa).

The 123-residue stretch at 102 to 224 folds into the MPN domain; that stretch reads ALSDPSSVGR…PVSLAERGWV (123 aa). Residues H173, H175, and D186 each contribute to the Zn(2+) site. A JAMM motif motif is present at residues 173–186; that stretch reads HNHPSGNPEPSEAD.

The protein belongs to the UPF0758 family.

This chain is UPF0758 protein XC_3944, found in Xanthomonas campestris pv. campestris (strain 8004).